The following is a 362-amino-acid chain: EARP-interacting protein 1 (362 aa).

4 WD repeats span residues 61–108 (HPAG…RTLE), 206–246 (AHIH…SALT), 250–290 (PHAH…SEQQ), and 319–359 (EHED…KYAL).

It belongs to the WD repeat EIPR1 family. Expressed in the hypodermis and the pharynx.

The protein localises to the cytoplasm. Plays a role in the trafficking of cargo to dense-core vesicles, probably through association with the endosome-associated recycling protein (EARP) complex. Important for neuronal function. In Caenorhabditis elegans, this protein is EARP-interacting protein 1.